The primary structure comprises 444 residues: Signal recognition particle 54 kDa protein (444 aa).

GTP contacts are provided by residues 102 to 109 (GVQGSGKT), 184 to 188 (DTAGR), and 244 to 247 (SKMD).

Belongs to the GTP-binding SRP family. SRP54 subfamily. As to quaternary structure, part of the signal recognition particle protein translocation system, which is composed of SRP and FtsY. Archaeal SRP consists of a 7S RNA molecule of 300 nucleotides and two protein subunits: SRP54 and SRP19.

It is found in the cytoplasm. It carries out the reaction GTP + H2O = GDP + phosphate + H(+). Its function is as follows. Involved in targeting and insertion of nascent membrane proteins into the cytoplasmic membrane. Binds to the hydrophobic signal sequence of the ribosome-nascent chain (RNC) as it emerges from the ribosomes. The SRP-RNC complex is then targeted to the cytoplasmic membrane where it interacts with the SRP receptor FtsY. In Sulfolobus acidocaldarius (strain ATCC 33909 / DSM 639 / JCM 8929 / NBRC 15157 / NCIMB 11770), this protein is Signal recognition particle 54 kDa protein.